A 320-amino-acid chain; its full sequence is uncharacterized protein (320 aa).

Residues 22–86 enclose the FHA domain; the sequence is KTIGRSSSFD…IRDLNNKTGT (65 aa). Residues 242–264 form a disordered region; it reads TDTDTTEEKEEEEEKEEGDDEEG.

This is an uncharacterized protein from Saccharomyces cerevisiae (strain ATCC 204508 / S288c) (Baker's yeast).